We begin with the raw amino-acid sequence, 243 residues long: 5'-methylthioadenosine/S-adenosylhomocysteine nucleosidase (243 aa).

Glu-12 serves as the catalytic Proton acceptor. Substrate contacts are provided by residues Gly-78, Met-158, and 179–180 (ME). The active-site Proton donor is the Asp-203.

This sequence belongs to the PNP/UDP phosphorylase family. MtnN subfamily.

It carries out the reaction S-adenosyl-L-homocysteine + H2O = S-(5-deoxy-D-ribos-5-yl)-L-homocysteine + adenine. The enzyme catalyses S-methyl-5'-thioadenosine + H2O = 5-(methylsulfanyl)-D-ribose + adenine. The catalysed reaction is 5'-deoxyadenosine + H2O = 5-deoxy-D-ribose + adenine. Its pathway is amino-acid biosynthesis; L-methionine biosynthesis via salvage pathway; S-methyl-5-thio-alpha-D-ribose 1-phosphate from S-methyl-5'-thioadenosine (hydrolase route): step 1/2. Functionally, catalyzes the irreversible cleavage of the glycosidic bond in both 5'-methylthioadenosine (MTA) and S-adenosylhomocysteine (SAH/AdoHcy) to adenine and the corresponding thioribose, 5'-methylthioribose and S-ribosylhomocysteine, respectively. Also cleaves 5'-deoxyadenosine, a toxic by-product of radical S-adenosylmethionine (SAM) enzymes, into 5-deoxyribose and adenine. In Colwellia psychrerythraea (strain 34H / ATCC BAA-681) (Vibrio psychroerythus), this protein is 5'-methylthioadenosine/S-adenosylhomocysteine nucleosidase.